A 402-amino-acid polypeptide reads, in one-letter code: Glutamate N-acetyltransferase (402 aa).

Residues Thr-151, Lys-178, Thr-189, Glu-267, Asn-397, and Thr-402 each coordinate substrate. Thr-189 acts as the Nucleophile in catalysis.

It belongs to the ArgJ family. Heterotetramer of two alpha and two beta chains.

It localises to the cytoplasm. It carries out the reaction N(2)-acetyl-L-ornithine + L-glutamate = N-acetyl-L-glutamate + L-ornithine. It functions in the pathway amino-acid biosynthesis; L-arginine biosynthesis; L-ornithine and N-acetyl-L-glutamate from L-glutamate and N(2)-acetyl-L-ornithine (cyclic): step 1/1. Functionally, catalyzes the transfer of the acetyl group from N(2)-acetylornithine to glutamate, forming N-acetylglutamate and L-ornithine. This Methanothermobacter thermautotrophicus (strain ATCC 29096 / DSM 1053 / JCM 10044 / NBRC 100330 / Delta H) (Methanobacterium thermoautotrophicum) protein is Glutamate N-acetyltransferase.